A 71-amino-acid chain; its full sequence is Small ribosomal subunit protein bS21 (71 aa).

Belongs to the bacterial ribosomal protein bS21 family.

This chain is Small ribosomal subunit protein bS21, found in Chromohalobacter salexigens (strain ATCC BAA-138 / DSM 3043 / CIP 106854 / NCIMB 13768 / 1H11).